Here is a 207-residue protein sequence, read N- to C-terminus: Large ribosomal subunit protein uL3 (207 aa).

Residues 119–143 (GFQGSIKRNGQHRGPMAHGSRYHRR) form a disordered region.

It belongs to the universal ribosomal protein uL3 family. Part of the 50S ribosomal subunit. Forms a cluster with proteins L14 and L19.

Its function is as follows. One of the primary rRNA binding proteins, it binds directly near the 3'-end of the 23S rRNA, where it nucleates assembly of the 50S subunit. This Ligilactobacillus salivarius (strain UCC118) (Lactobacillus salivarius) protein is Large ribosomal subunit protein uL3.